Consider the following 864-residue polypeptide: Leucine--tRNA ligase (864 aa).

A 'HIGH' region motif is present at residues 42-52 (PYPSGKLHMGH). The 'KMSKS' region motif lies at 624 to 628 (KMSKS). Lysine 627 contacts ATP.

It belongs to the class-I aminoacyl-tRNA synthetase family.

It localises to the cytoplasm. The enzyme catalyses tRNA(Leu) + L-leucine + ATP = L-leucyl-tRNA(Leu) + AMP + diphosphate. The protein is Leucine--tRNA ligase of Burkholderia pseudomallei (strain 668).